A 599-amino-acid chain; its full sequence is Adenine deaminase (599 aa).

The interval 1-31 (MARSNRRGGRGDPEDDPAWAPPGHRCAGERA) is disordered.

The protein belongs to the metallo-dependent hydrolases superfamily. Adenine deaminase family. Requires Mn(2+) as cofactor.

The catalysed reaction is adenine + H2O + H(+) = hypoxanthine + NH4(+). The chain is Adenine deaminase from Methanopyrus kandleri (strain AV19 / DSM 6324 / JCM 9639 / NBRC 100938).